A 369-amino-acid chain; its full sequence is Flagellar P-ring protein (369 aa).

Residues 1–23 form the signal peptide; that stretch reads MRIASFFTVLLTLLTLNITPASA.

Belongs to the FlgI family. In terms of assembly, the basal body constitutes a major portion of the flagellar organelle and consists of four rings (L,P,S, and M) mounted on a central rod.

The protein localises to the periplasm. The protein resides in the bacterial flagellum basal body. Assembles around the rod to form the L-ring and probably protects the motor/basal body from shearing forces during rotation. In Pectobacterium atrosepticum (strain SCRI 1043 / ATCC BAA-672) (Erwinia carotovora subsp. atroseptica), this protein is Flagellar P-ring protein.